A 235-amino-acid chain; its full sequence is Ribonuclease 3 (235 aa).

The RNase III domain maps to 6–131 (IDQLEKLTGH…LIAVIYLDGG (126 aa)). Mg(2+) is bound at residue Glu-44. Asp-48 is an active-site residue. Mg(2+) contacts are provided by Asp-117 and Glu-120. Residue Glu-120 is part of the active site. The region spanning 156 to 225 (DAKTQLQEWA…AEKILRREGI (70 aa)) is the DRBM domain.

The protein belongs to the ribonuclease III family. As to quaternary structure, homodimer. Mg(2+) is required as a cofactor.

It is found in the cytoplasm. It catalyses the reaction Endonucleolytic cleavage to 5'-phosphomonoester.. Functionally, digests double-stranded RNA. Involved in the processing of primary rRNA transcript to yield the immediate precursors to the large and small rRNAs (23S and 16S). Processes some mRNAs, and tRNAs when they are encoded in the rRNA operon. Processes pre-crRNA and tracrRNA of type II CRISPR loci if present in the organism. This chain is Ribonuclease 3, found in Bartonella henselae (strain ATCC 49882 / DSM 28221 / CCUG 30454 / Houston 1) (Rochalimaea henselae).